The chain runs to 333 residues: Minor fimbrium tip subunit MfA4 (333 aa).

The first 18 residues, 1–18 (MKKYLLYASLLTSVLLFS), serve as a signal peptide directing secretion. Cys-19 carries the N-palmitoyl cysteine lipid modification. Cys-19 carries S-diacylglycerol cysteine lipidation. A propeptide spanning residues 19–53 (CSKNNPSEPVEDRSIEISIRVDDFTKTGETVRYER) is cleaved from the precursor.

The protein belongs to the bacteroidetes fimbrillin superfamily. FimA/Mfa1 family. As to quaternary structure, component of the fimbrium tip. Minor fimbriae are composed of a structural subunit, most often Mfa1, and the accessory subunits Mfa3, Mfa4 and Mfa5. Mfa4 is required for Mfa3 and Mfa5 insertion into the fimbrium. Fimbrium assembly occurs by linear, head-to-tail oligomerization of fimbrial subunits. This is mediated via insertion of a C-terminal beta-strand from one subunit into a groove in the N-terminal domain of the following subunit.

Its subcellular location is the fimbrium. It localises to the cell outer membrane. Functionally, tip subunit of the minor fimbriae. These filamentous pili are attached to the cell surface; they mediate biofilm formation, adhesion onto host cells and onto other bacteria that are part of the oral microbiome. They play an important role in invasion of periodontal tissues and are recognized as major virulence factors. The sequence is that of Minor fimbrium tip subunit MfA4 from Porphyromonas gingivalis (strain ATCC 33277 / DSM 20709 / CIP 103683 / JCM 12257 / NCTC 11834 / 2561).